Consider the following 455-residue polypeptide: Inactive peptidyl-prolyl cis-trans isomerase shutdown (455 aa).

The disordered stretch occupies residues 34 to 54 (SQQNHARDLGLDSDSDSDYED). A compositionally biased stretch (acidic residues) spans 44–54 (LDSDSDSDYED). One can recognise a PPIase FKBP-type domain in the interval 103-192 (KARVSVRYSG…LFKVEVIDYS (90 aa)). 2 TPR repeats span residues 218-251 (AVDL…LNYC) and 303-336 (CKAL…QPAN).

This sequence belongs to the FKBP6 family. In terms of assembly, interacts with Hsp83. Strongly expressed in the germline stem cells and in 16-cell cysts. Present in the germ cells throughout embryogenesis. Defects are due to derepression of transposable elements and impaired piRNA biogenesis.

It localises to the cytoplasm. It is found in the cytoplasmic ribonucleoprotein granule. Co-chaperone required during oogenesis to repress transposable elements and prevent their mobilization, which is essential for the germline integrity. Acts via the piRNA metabolic process, which mediates the repression of transposable elements during meiosis by forming complexes composed of piRNAs and Piwi proteins and govern the methylation and subsequent repression of transposons. Acts as a co-chaperone via its interaction with Hsp83/HSP90 and is required for the biogenesis of all three piRNA major populations. This Drosophila melanogaster (Fruit fly) protein is Inactive peptidyl-prolyl cis-trans isomerase shutdown.